The sequence spans 306 residues: Ribonucleoside-diphosphate reductase small subunit (306 aa).

Fe cation contacts are provided by D66, E96, and H99. Residue Y103 is part of the active site. The chain crosses the membrane as a helical span at residues 153–173 (ILMILIEGIFFVSSFAAIAYL). 3 residues coordinate Fe cation: E159, E193, and H196.

The protein belongs to the ribonucleoside diphosphate reductase small chain family. Heterotetramer composed of a homodimer of the large subunit (R1) and a homodimer of the small subunit (R2). Larger multisubunit protein complex are also active, composed of (R1)n(R2)n. It depends on Fe cation as a cofactor.

Its subcellular location is the host membrane. It carries out the reaction a 2'-deoxyribonucleoside 5'-diphosphate + [thioredoxin]-disulfide + H2O = a ribonucleoside 5'-diphosphate + [thioredoxin]-dithiol. In terms of biological role, ribonucleoside-diphosphate reductase holoenzyme provides the precursors necessary for viral DNA synthesis. Allows virus growth in non-dividing cells, as well as reactivation from latency in infected hosts. Catalyzes the biosynthesis of deoxyribonucleotides from the corresponding ribonucleotides. This is Ribonucleoside-diphosphate reductase small subunit from Varicella-zoster virus (strain Dumas) (HHV-3).